We begin with the raw amino-acid sequence, 65 residues long: Large ribosomal subunit protein uL30 (65 aa).

The protein belongs to the universal ribosomal protein uL30 family. As to quaternary structure, part of the 50S ribosomal subunit.

This chain is Large ribosomal subunit protein uL30, found in Methylobacillus flagellatus (strain ATCC 51484 / DSM 6875 / VKM B-1610 / KT).